We begin with the raw amino-acid sequence, 335 residues long: tRNA N6-adenosine threonylcarbamoyltransferase (335 aa).

Fe cation is bound by residues H112 and H116. Residues 134-138 (VVSGG), D167, G180, and N273 contribute to the substrate site. D301 is a binding site for Fe cation.

Belongs to the KAE1 / TsaD family. Fe(2+) is required as a cofactor.

The protein resides in the cytoplasm. It carries out the reaction L-threonylcarbamoyladenylate + adenosine(37) in tRNA = N(6)-L-threonylcarbamoyladenosine(37) in tRNA + AMP + H(+). In terms of biological role, required for the formation of a threonylcarbamoyl group on adenosine at position 37 (t(6)A37) in tRNAs that read codons beginning with adenine. Is involved in the transfer of the threonylcarbamoyl moiety of threonylcarbamoyl-AMP (TC-AMP) to the N6 group of A37, together with TsaE and TsaB. TsaD likely plays a direct catalytic role in this reaction. The chain is tRNA N6-adenosine threonylcarbamoyltransferase from Shouchella clausii (strain KSM-K16) (Alkalihalobacillus clausii).